A 336-amino-acid chain; its full sequence is Alcohol dehydrogenase (336 aa).

Residues C37, H58, C89, C92, C95, C103, and C145 each contribute to the Zn(2+) site.

The protein belongs to the zinc-containing alcohol dehydrogenase family. The cofactor is Zn(2+).

The enzyme catalyses a primary alcohol + NAD(+) = an aldehyde + NADH + H(+). The catalysed reaction is a secondary alcohol + NAD(+) = a ketone + NADH + H(+). This chain is Alcohol dehydrogenase (adh), found in Staphylococcus aureus (strain Mu50 / ATCC 700699).